Consider the following 144-residue polypeptide: Large ribosomal subunit protein uL16 (144 aa).

This sequence belongs to the universal ribosomal protein uL16 family. As to quaternary structure, part of the 50S ribosomal subunit.

Binds 23S rRNA and is also seen to make contacts with the A and possibly P site tRNAs. This chain is Large ribosomal subunit protein uL16, found in Bacillus anthracis (strain A0248).